Here is a 734-residue protein sequence, read N- to C-terminus: Predicted GPI-anchored protein 49 (734 aa).

The signal sequence occupies residues Met-1–Leu-16. N-linked (GlcNAc...) asparagine glycosylation is found at Asn-27, Asn-56, Asn-68, and Asn-71. A disordered region spans residues Asp-78–Asp-145. Over residues Ser-87–Asp-98 the composition is skewed to low complexity. N-linked (GlcNAc...) asparagine glycosylation is found at Asn-105, Asn-118, Asn-136, and Asn-180. Positions Phe-110–Asn-129 are enriched in acidic residues. A compositionally biased stretch (polar residues) spans Met-130–Gln-141. Disordered stretches follow at residues Ser-216 to Lys-262 and Asp-331 to Thr-360. The segment covering Ser-228–Leu-259 has biased composition (basic residues). N-linked (GlcNAc...) asparagine glycans are attached at residues Asn-388 and Asn-427. Residues Pro-447–Thr-479 form a disordered region. Residues His-453–Pro-463 are compositionally biased toward basic and acidic residues. Basic residues predominate over residues Arg-464–Thr-479. Asn-517 is a glycosylation site (N-linked (GlcNAc...) asparagine). The disordered stretch occupies residues Lys-582–Gln-653. Low complexity predominate over residues Thr-592 to Lys-611. Residues Glu-620–Asn-631 are compositionally biased toward polar residues. Asn-622 and Asn-631 each carry an N-linked (GlcNAc...) asparagine glycan. The segment covering Thr-632–Pro-650 has biased composition (low complexity). Residue Ser-707 is the site of GPI-anchor amidated serine attachment. A propeptide spans Ala-708 to Met-734 (removed in mature form). Residue Asn-711 is glycosylated (N-linked (GlcNAc...) asparagine).

The protein resides in the cell membrane. The polypeptide is Predicted GPI-anchored protein 49 (PGA49) (Candida albicans (strain SC5314 / ATCC MYA-2876) (Yeast)).